Here is a 79-residue protein sequence, read N- to C-terminus: Acyl carrier protein (79 aa).

Residues 2–77 enclose the Carrier domain; sequence SDTAERVKKI…DAIDFINQKT (76 aa). S37 is modified (O-(pantetheine 4'-phosphoryl)serine).

Belongs to the acyl carrier protein (ACP) family. Post-translationally, 4'-phosphopantetheine is transferred from CoA to a specific serine of apo-ACP by AcpS. This modification is essential for activity because fatty acids are bound in thioester linkage to the sulfhydryl of the prosthetic group.

It localises to the cytoplasm. The protein operates within lipid metabolism; fatty acid biosynthesis. In terms of biological role, carrier of the growing fatty acid chain in fatty acid biosynthesis. The chain is Acyl carrier protein from Rhodospirillum centenum (strain ATCC 51521 / SW).